The chain runs to 349 residues: L-lactate dehydrogenase (349 aa).

The interval 199-219 (APEGSIIGADGNPTTDASTMF) is disordered.

The protein belongs to the LDH2/MDH2 oxidoreductase family.

It localises to the cytoplasm. The enzyme catalyses (S)-lactate + NAD(+) = pyruvate + NADH + H(+). Its pathway is fermentation; pyruvate fermentation to lactate; (S)-lactate from pyruvate: step 1/1. In Cupriavidus necator (strain ATCC 17699 / DSM 428 / KCTC 22496 / NCIMB 10442 / H16 / Stanier 337) (Ralstonia eutropha), this protein is L-lactate dehydrogenase (ldh).